The following is a 647-amino-acid chain: Probable squalene--hopene cyclase (647 aa).

The PFTB 1 repeat unit spans residues 67 to 108 (EAKIGNYLRRTQGAHGGWPLVHDGPFDMSASVKSYFALKMIG). The Proton donor role is filled by Asp-388. 2 PFTB repeats span residues 413–454 (IARG…GALL) and 530–577 (IRKA…ALLG).

Belongs to the terpene cyclase/mutase family.

The catalysed reaction is squalene = hop-22(29)-ene. The enzyme catalyses squalene + H2O = hopan-22-ol. It functions in the pathway secondary metabolite biosynthesis; hopanoid biosynthesis. Functionally, catalyzes the cyclization of squalene into hopene. Probably part of an operon y4aABCD involved in the synthesis of an isoprenoid compound. The polypeptide is Probable squalene--hopene cyclase (shc) (Sinorhizobium fredii (strain NBRC 101917 / NGR234)).